The primary structure comprises 645 residues: Cysteine-rich receptor-like protein kinase 10 (645 aa).

A signal peptide spans 1-27 (MSMACYYLAAAAAGLALLLLHAPLTDA). 2 consecutive Gnk2-homologous domains span residues 28–132 (QTLV…NDAF) and 140–251 (SQGM…VYPF). Topologically, residues 28-283 (QTLVPLCGDS…AGERSKNKRS (256 aa)) are extracellular. Residues Asn-39 and Asn-91 are each glycosylated (N-linked (GlcNAc...) asparagine). Cystine bridges form between Cys-86/Cys-95 and Cys-98/Cys-123. N-linked (GlcNAc...) asparagine glycans are attached at residues Asn-151 and Asn-169. Cystine bridges form between Cys-204–Cys-213 and Cys-216–Cys-242. The chain crosses the membrane as a helical span at residues 284 to 304 (AILAISMPTIALVLATIAAWF). Over 305–645 (CSTSWRRRRL…WVQEIGATAS (341 aa)) the chain is Cytoplasmic. Positions 348-619 (FSEHKRLGEG…PLMSAVNAML (272 aa)) constitute a Protein kinase domain. ATP-binding positions include 354 to 362 (LGEGGFGVV) and Lys-376. Asp-473 functions as the Proton acceptor in the catalytic mechanism.

The protein belongs to the protein kinase superfamily. Ser/Thr protein kinase family. CRK subfamily.

Its subcellular location is the membrane. Functionally, involved in disease resistance. Required for NPR1/NH1-mediated immunity to the bacterial blight pathogen Xanthomomas oryzae pv. oryzae (Xoo). Required for the benzothiadiazole (BTH)-induced immune response. Probably regulated by the transcription factor TGA2.1. This is Cysteine-rich receptor-like protein kinase 10 from Oryza sativa subsp. japonica (Rice).